Consider the following 803-residue polypeptide: Cation channel sperm-associated auxiliary subunit delta (803 aa).

Residues 1–15 (MLMLMLAAVATVVRA) form the signal peptide. The Extracellular segment spans residues 16–720 (QTVCRFRTVR…ALPVAEFRPM (705 aa)). 7 cysteine pairs are disulfide-bonded: cysteine 19/cysteine 365, cysteine 55/cysteine 142, cysteine 141/cysteine 148, cysteine 383/cysteine 492, cysteine 506/cysteine 698, cysteine 521/cysteine 568, and cysteine 620/cysteine 648. N-linked (GlcNAc...) asparagine glycosylation is found at asparagine 226, asparagine 418, asparagine 436, asparagine 468, asparagine 534, asparagine 545, and asparagine 626. Residues 721–742 (TSILLMVTVTLFTMWLAYAIPK) traverse the membrane as a helical segment. The Cytoplasmic portion of the chain corresponds to 743-803 (QLRTERGRRL…QIGKKPDIKK (61 aa)). The interval 782–803 (SRRVKDQPEKIPQIGKKPDIKK) is disordered.

The protein belongs to the CATSPERD family. As to quaternary structure, component of the CatSper complex or CatSpermasome composed of the core pore-forming members CATSPER1, CATSPER2, CATSPER3 and CATSPER4 as well as auxiliary members CATSPERB, CATSPERG, CATSPERD, CATSPERE, CATSPERZ, C2CD6/CATSPERT, SLCO6C1, TMEM249, TMEM262 and EFCAB9. HSPA1 may be an additional auxiliary complex member. The core complex members CATSPER1, CATSPER2, CATSPER3 and CATSPER4 form a heterotetrameric channel. The auxiliary CATSPERB, CATSPERG, CATSPERD and CATSPERE subunits form a pavilion-like structure over the pore which stabilizes the complex through interactions with CATSPER4, CATSPER3, CATSPER1 and CATSPER2 respectively. SLCO6C1 interacts with CATSPERE and TMEM262/CATSPERH interacts with CATSPERB, further stabilizing the complex. C2CD6/CATSPERT interacts at least with CATSPERD and is required for targeting the CatSper complex in the flagellar membrane.

The protein resides in the cell projection. It is found in the cilium. The protein localises to the flagellum membrane. Auxiliary component of the CatSper complex, a complex involved in sperm cell hyperactivation. Sperm cell hyperactivation is needed for sperm motility which is essential late in the preparation of sperm for fertilization. Required for CATSPER1 stability before intraflagellar transport and/or incorporation of the CatSper complex channel into the flagellar membrane. The protein is Cation channel sperm-associated auxiliary subunit delta of Rattus norvegicus (Rat).